Here is a 468-residue protein sequence, read N- to C-terminus: Aspartate ammonia-lyase (468 aa).

The L-aspartate site is built by Thr-101, Ser-140, Thr-141, Asn-142, Thr-187, and His-188. Residues 317–326 (GSSIMPGKVN) form an SS loop region. The active-site Proton acceptor is the Ser-318. Residues Ser-319 and Lys-324 each contribute to the L-aspartate site.

It belongs to the class-II fumarase/aspartase family. Aspartase subfamily. Homotetramer.

It catalyses the reaction L-aspartate = fumarate + NH4(+). Unlike E.coli aspartase, the enzyme is not activated by the presence of divalent metal ions at alkaline pH. Its function is as follows. Catalyzes the reversible conversion of L-aspartate to fumarate and ammonia. Is highly specific for L-aspartate in the deamination reaction, and cannot use alternative substrates such as D-aspartic acid, alpha-methyl-DL-aspartic acid, beta-methyl-DL-aspartic acid or L-glutamate. In the reverse reaction, alternative nucleophiles (such as hydroxylamine, hydrazine, methoxylamine and methylamine) can replace ammonia in vitro, leading to the formation of N-substituted aspartic acid derivatives. The sequence is that of Aspartate ammonia-lyase from Bacillus sp.